Here is a 910-residue protein sequence, read N- to C-terminus: Potassium/sodium hyperpolarization-activated cyclic nucleotide-gated channel 1 (910 aa).

Residues 1-75 (MEGGGKPNSA…PAGSFEDAEG (75 aa)) are disordered. Topologically, residues 1 to 131 (MEGGGKPNSA…WIIHPYSDFR (131 aa)) are cytoplasmic. Residues 132–153 (FYWDLIMLIMMVGNLVIIPVGI) form a helical membrane-spanning segment. Residues 154-162 (TFFTEQTTT) lie on the Extracellular side of the membrane. A helical transmembrane segment spans residues 163–183 (PWIIFNVASDTVFLLDLIMNF). Residues 184 to 204 (RTGTVNEDSSEIILDPKVIKM) are Cytoplasmic-facing. The chain crosses the membrane as a helical span at residues 205–225 (NYLKSWFVVDFISSIPVDYIF). Residues 226-249 (LIVEKGMDSEVYKTARALRIVRFT) are Extracellular-facing. Residues 250 to 270 (KILSLLRLLRLSRLIRYIHQW) form a helical; Voltage-sensor membrane-spanning segment. At 271-284 (EEIFHMTYDLASAV) the chain is on the cytoplasmic side. Residues 285-307 (VRIFNLIGMMLLLCHWDGCLQFL) traverse the membrane as a helical segment. Over 308 to 333 (VPLLQDFPPDCWVSLNEMVNDSWGKQ) the chain is Extracellular. N-linked (GlcNAc...) asparagine glycosylation is present at Asn-327. Positions 334–355 (YSYALFKAMSHMLCIGYGAQAP) form an intramembrane region, pore-forming. The short motif at 347–351 (CIGYG) is the Selectivity filter element. Residues 356–360 (VSMSD) lie on the Extracellular side of the membrane. The chain crosses the membrane as a helical span at residues 361-381 (LWITMLSMIVGATCYAMFVGH). The Cytoplasmic segment spans residues 382 to 910 (ATALIQSLDS…AEKPRFASNL (529 aa)). 3',5'-cyclic AMP contacts are provided by Gly-528, Glu-529, Cys-531, Arg-538, Thr-539, Arg-579, and Arg-582. Disordered stretches follow at residues 634–681 (TALN…QPSA), 771–791 (QQQQ…VHKS), and 865–910 (QMSS…ASNL). Low complexity predominate over residues 639 to 680 (TSSTTTPTSRMRTQSPPVYTATSLSHSNLHSPSPSTQTPQPS). Over residues 780 to 791 (GSSTPKNEVHKS) the composition is skewed to polar residues. Positions 875-885 (RGVPPAPPPPA) are enriched in pro residues. A compositionally biased stretch (basic and acidic residues) spans 900-910 (DAEKPRFASNL).

It belongs to the potassium channel HCN family. Homotetramer. Heterotetramer with HCN2. The potassium channel is composed of a homo- or heterotetrameric complex of pore-forming subunits. Interacts with KCNE2. Interacts with the SH3 domain of CSK. In terms of processing, N-glycosylated. Predominantly expressed in brain. Highly expressed in apical dendrites of pyramidal neurons in the cortex, in the layer corresponding to the stratum lacunosum-moleculare in the hippocampus and in axons of basket cells in the cerebellum (at protein level). Expressed in a subset of elongated cells in taste buds.

The protein resides in the cell membrane. The enzyme catalyses Na(+)(in) = Na(+)(out). It catalyses the reaction K(+)(in) = K(+)(out). Activated by cAMP. cAMP binding causes a conformation change that leads to the assembly of an active tetramer and channel opening. Compared to other family members, cAMP has less stimulatory effect on HCN1 because part of the molecules already contain bound cAMP and form homotetramers when cAMP levels are low, this inherent tetramerization in HCN1 results in a weaker response to increased cAMP. Hyperpolarization-activated ion channel that are permeable to sodium and potassium ions. Exhibits weak selectivity for potassium over sodium ions. Contributes to the native pacemaker currents in heart (If) and in neurons (Ih). Participates in cerebellar mechanisms of motor learning. May mediate responses to sour stimuli. The protein is Potassium/sodium hyperpolarization-activated cyclic nucleotide-gated channel 1 (Hcn1) of Mus musculus (Mouse).